Reading from the N-terminus, the 194-residue chain is Phosphoheptose isomerase (194 aa).

In terms of domain architecture, SIS spans 37-194 (ISDSFKQGGK…LIEFEMAKDV (158 aa)). 52–54 (NGG) serves as a coordination point for substrate. Residues histidine 61 and glutamate 65 each contribute to the Zn(2+) site. Substrate contacts are provided by residues glutamate 65, 93 to 94 (ND), 119 to 121 (STS), serine 124, and glutamine 172. Zn(2+) contacts are provided by glutamine 172 and histidine 180.

It belongs to the SIS family. GmhA subfamily. In terms of assembly, homotetramer. Zn(2+) is required as a cofactor.

The protein resides in the cytoplasm. It carries out the reaction 2 D-sedoheptulose 7-phosphate = D-glycero-alpha-D-manno-heptose 7-phosphate + D-glycero-beta-D-manno-heptose 7-phosphate. It functions in the pathway carbohydrate biosynthesis; D-glycero-D-manno-heptose 7-phosphate biosynthesis; D-glycero-alpha-D-manno-heptose 7-phosphate and D-glycero-beta-D-manno-heptose 7-phosphate from sedoheptulose 7-phosphate: step 1/1. Functionally, catalyzes the isomerization of sedoheptulose 7-phosphate in D-glycero-D-manno-heptose 7-phosphate. This chain is Phosphoheptose isomerase, found in Actinobacillus succinogenes (strain ATCC 55618 / DSM 22257 / CCUG 43843 / 130Z).